The sequence spans 519 residues: S-type anion channel SLAH2 (519 aa).

Residues 1–31 (MNNPRSVSPLVSPANHSDLLENQRQSGSGDF) are disordered. The Cytoplasmic portion of the chain corresponds to 1 to 140 (MNNPRSVSPL…LPEDKTWPFL (140 aa)). The span at 20–29 (LENQRQSGSG) shows a compositional bias: polar residues. Phosphoserine occurs at positions 77 and 85. The helical transmembrane segment at 141-161 (LRFPITSYGMCLGVSSQAIMW) threads the bilayer. Over 162 to 185 (KTLATTEAEKFLHVTQVINHVLWW) the chain is Extracellular. The helical transmembrane segment at 186 to 206 (ISLLLLLAVSITYLFKTILFF) threads the bilayer. Residues 207–220 (EAVRREFRHPIRVN) are Cytoplasmic-facing. Residues 221–241 (FFFAPLISILFLALGIPHSII) form a helical membrane-spanning segment. Residues 242 to 247 (SHLPST) are Extracellular-facing. The helical transmembrane segment at 248–268 (LWYFLMAPILFLEMKIYGQWM) threads the bilayer. The Cytoplasmic segment spans residues 269–281 (SGGQRRLSKVANP). Residues 282-302 (TNHLSIVGNFAGALLGASMGL) traverse the membrane as a helical segment. The Extracellular portion of the chain corresponds to 303–304 (KE). Residues 305–325 (GPIFFFAIGLAYYLVLFVTLY) form a helical membrane-spanning segment. Residues 326 to 340 (QRLPTNETLPKELHP) lie on the Cytoplasmic side of the membrane. The chain crosses the membrane as a helical span at residues 341 to 361 (VFFLFVAAPAVASMAWTKISA). S362 is a topological domain (extracellular). A helical membrane pass occupies residues 363 to 383 (FDLGSRLAYFISLFLYFSLVC). Topologically, residues 384–389 (RINLFR) are cytoplasmic. The helical transmembrane segment at 390–410 (GFKFSLAWWAYTFPMTAVASA) threads the bilayer. The Extracellular segment spans residues 411–424 (TIKYSDEVTGVATK). A helical transmembrane segment spans residues 425–445 (ILSVVMSGAATLTVIAVLGLT). Over 446–519 (VMHAFVQRDL…VDSSTVQNSN (74 aa)) the chain is Cytoplasmic. The disordered stretch occupies residues 495–519 (PEDNQIDLESPPLVNVDSSTVQNSN). Residues 510–519 (VDSSTVQNSN) are compositionally biased toward polar residues.

This sequence belongs to the SLAC1 S-type anion channel family. Homotrimer. As to expression, expressed in lateral root primordia and tap root tips.

The protein localises to the cell membrane. Its function is as follows. Slow, weak voltage-dependent S-type anion efflux channel involved in maintenance of anion homeostasis. The sequence is that of S-type anion channel SLAH2 (SLAH2) from Arabidopsis thaliana (Mouse-ear cress).